The chain runs to 1138 residues: MSYNSLTTIDIDITQLLHLKSVNLRSNKLGNSSGVSYFGSMDTLQKLNLKENYLTELPSTFYLLKLSSLKLDTFTPLYQQQQQQQNQLQRPIINSQSTSNESLIHEINRSFENLSMSEPVSPRIAALKNEKKGPPKPLPKTKGLHSSSSNINTSNNITPILMSPIHDGNKKSPSIISNNNNNNNSNSNIITSNGTVIPQLVFKNEPTGGRLRSFTLDADHISPGRELVSTGSSDEILYFNSEGGCENSDSDEPIQPLSAGRSRAQTISGKQPSIINNNNNNNSGGGSGNNNNSGGGGGSRKAFQNLIKSAKQIGSNIKNKTHHINGHSSSSQSNSTTNTPSISSTPYPTSTIKTNVSDTNTPVNYNGQQQISKVIQRVSGEIDPLYSGIDSPRTLERRNSSRDDIPISPPQGCMTPIKRLGSVEGDEISAIFSSSTDANMDVSQDYSSSTPTVNSMSYQSSFLDTFDNQSTVGSPTFYQLPVSSQPPQHPPPPPPIKDNNQPKLNQSQNLINTNSNSVTTTNNSSQTTTTTTTTTTNNNNVLNLEKLHKLDFAEDINGDERCSNPLYSKKKLAGLLFPNKHHQPSALKTAKIRFKSSKRLATTVNSNSSNNLMMSNSPLSSSSMNLLQQSNSPQYSGTPTSGSFQNQSVLSATLMSSPSMSDVFSGGNSQGGGSSLSQSGSITPVAPLSAVQGSPIGNSGSVNNIYLEGDDFIRDLMQSPIINQEIEFTSEDGVPKVKNITLKMLTSLLTHEKGQSNELNGIFFDTYLLFTSIPLVIEHLESRFLNGKNHIVKQKVITFSQKWVEVCWSDFKEEHIELLLKFLNDCSEQIEKLVTGSFALRTSLNLLLNIINMKRDGTYITEEEETFEQPAPIPDFIQLPNCVDINLMDLRPHEIARQLTILDHELLTQITKQQMLDYAVHQTNSPSIVKVTDRFNYLVLWVSTEIVLSLTIEKRIETIFKFVNIALNCWYLKNFNSAIAIIAAMSKPSIEKLKQTWGFIRNTKANAPIQELKELILPTNVARLRKIMDSVEAPFIPYLGAYFSHSIAIHAGNKSIVNEQYINMQKYDMMGKIIRSITVAQEKKYNLTPVGVLQKFLTDSFVLTEKQLYSEASKIEEKGDSYITETTKFGSIFKKKDK.

3 LRR repeats span residues 1 to 16 (MSYN…ITQL), 18 to 39 (HLKS…SYFG), and 43 to 64 (TLQK…FYLL). 7 disordered regions span residues 126–180 (ALKN…SNNN), 239–301 (FNSE…GSRK), 319–360 (NKTH…SDTN), 389–411 (IDSP…SPPQ), 473–540 (GSPT…NNNN), 601–643 (ATTV…TSGS), and 660–680 (MSDV…SQSG). Positions 140-158 (KTKGLHSSSSNINTSNNIT) are enriched in low complexity. Residues 263–275 (RAQTISGKQPSII) are compositionally biased toward polar residues. Over residues 283-299 (SGGGSGNNNNSGGGGGS) the composition is skewed to gly residues. A compositionally biased stretch (low complexity) spans 326–352 (GHSSSSQSNSTTNTPSISSTPYPTSTI). The segment covering 393–405 (RTLERRNSSRDDI) has biased composition (basic and acidic residues). Residues 487–496 (PQHPPPPPPI) are compositionally biased toward pro residues. Positions 498–511 (DNNQPKLNQSQNLI) are enriched in polar residues. 2 stretches are compositionally biased toward low complexity: residues 512–540 (NTNS…NNNN) and 605–634 (NSNS…NSPQ). Residues 733 to 855 (GVPKVKNITL…LLLNIINMKR (123 aa)) enclose the N-terminal Ras-GEF domain. In terms of domain architecture, Ras-GEF spans 891–1118 (RPHEIARQLT…YSEASKIEEK (228 aa)).

In terms of biological role, promotes the exchange of Ras-bound GDP by GTP. May play a role in chemotaxis. The polypeptide is Ras guanine nucleotide exchange factor N (gefN) (Dictyostelium discoideum (Social amoeba)).